The following is a 127-amino-acid chain: Small ribosomal subunit protein eS8 (127 aa).

This sequence belongs to the eukaryotic ribosomal protein eS8 family. In terms of assembly, part of the 30S ribosomal subunit.

This Pyrococcus horikoshii (strain ATCC 700860 / DSM 12428 / JCM 9974 / NBRC 100139 / OT-3) protein is Small ribosomal subunit protein eS8 (rps8e).